Reading from the N-terminus, the 213-residue chain is Large ribosomal subunit protein uL4 (213 aa).

Residues 51–90 (TASTLTKAEVRGGGRKPYKQKHTGRARQGSIRNPHYVGGG) are disordered. Residues 63–75 (GGRKPYKQKHTGR) show a composition bias toward basic residues.

This sequence belongs to the universal ribosomal protein uL4 family. In terms of assembly, part of the 50S ribosomal subunit.

Functionally, one of the primary rRNA binding proteins, this protein initially binds near the 5'-end of the 23S rRNA. It is important during the early stages of 50S assembly. It makes multiple contacts with different domains of the 23S rRNA in the assembled 50S subunit and ribosome. In terms of biological role, forms part of the polypeptide exit tunnel. This chain is Large ribosomal subunit protein uL4, found in Malacoplasma penetrans (strain HF-2) (Mycoplasma penetrans).